Consider the following 263-residue polypeptide: Phosphatidylglycerol--prolipoprotein diacylglyceryl transferase (263 aa).

Helical transmembrane passes span 17 to 37, 56 to 76, and 88 to 108; these read LSVR…IFLG, LLFY…VLFY, and IFAV…VLVA. Arginine 139 is an a 1,2-diacyl-sn-glycero-3-phospho-(1'-sn-glycerol) binding site. A run of 2 helical transmembrane segments spans residues 176-196 and 236-256; these read QLYH…WFTA and ISMG…MVVF.

Belongs to the Lgt family.

Its subcellular location is the cell inner membrane. It carries out the reaction L-cysteinyl-[prolipoprotein] + a 1,2-diacyl-sn-glycero-3-phospho-(1'-sn-glycerol) = an S-1,2-diacyl-sn-glyceryl-L-cysteinyl-[prolipoprotein] + sn-glycerol 1-phosphate + H(+). The protein operates within protein modification; lipoprotein biosynthesis (diacylglyceryl transfer). Catalyzes the transfer of the diacylglyceryl group from phosphatidylglycerol to the sulfhydryl group of the N-terminal cysteine of a prolipoprotein, the first step in the formation of mature lipoproteins. This chain is Phosphatidylglycerol--prolipoprotein diacylglyceryl transferase, found in Dechloromonas aromatica (strain RCB).